Here is a 322-residue protein sequence, read N- to C-terminus: MKTTFLDFEQPVADLEAKIEKLRFVQDDSAVDISEEIARLEAKSQTLSKNLYAKLTPWQIAQVSRHPQRPYTLDYARHIFTDFVELHGDRTYADDKAIVGGLARFNGQSCVVIGHQKGRDTKEKILRNFGMPRPEGYRKALRLMRLAEKFGLPVFTFVDTPGAYPGIDAEERGQSEAIGRNLYVMAELKVPIITTIIGEGGSGGALAIAVGDQVMMLQYATYSVISPEGCASILWKSAEKASEAAETMGITAARLKSLGLIDRVVNEPAGGAHRDHRAMAQTLKRALQDALRQVADLSPAELVEKRLERLMSYGRFKEQKVA.

The 262-residue stretch at 32–293 (DISEEIARLE…KRALQDALRQ (262 aa)) folds into the CoA carboxyltransferase C-terminal domain.

This sequence belongs to the AccA family. As to quaternary structure, acetyl-CoA carboxylase is a heterohexamer composed of biotin carboxyl carrier protein (AccB), biotin carboxylase (AccC) and two subunits each of ACCase subunit alpha (AccA) and ACCase subunit beta (AccD).

It localises to the cytoplasm. The enzyme catalyses N(6)-carboxybiotinyl-L-lysyl-[protein] + acetyl-CoA = N(6)-biotinyl-L-lysyl-[protein] + malonyl-CoA. It participates in lipid metabolism; malonyl-CoA biosynthesis; malonyl-CoA from acetyl-CoA: step 1/1. Functionally, component of the acetyl coenzyme A carboxylase (ACC) complex. First, biotin carboxylase catalyzes the carboxylation of biotin on its carrier protein (BCCP) and then the CO(2) group is transferred by the carboxyltransferase to acetyl-CoA to form malonyl-CoA. This chain is Acetyl-coenzyme A carboxylase carboxyl transferase subunit alpha, found in Aromatoleum aromaticum (strain DSM 19018 / LMG 30748 / EbN1) (Azoarcus sp. (strain EbN1)).